The sequence spans 450 residues: tRNA modification GTPase MnmE (450 aa).

Residues Arg20, Glu78, and Lys117 each contribute to the (6S)-5-formyl-5,6,7,8-tetrahydrofolate site. Positions 211–372 (GFRMVIVGKP…LEEAIYRETQ (162 aa)) constitute a TrmE-type G domain. Asn221 serves as a coordination point for K(+). GTP-binding positions include 221 to 226 (NVGKST), 240 to 246 (TDIPGTT), and 265 to 268 (DTAG). Ser225 lines the Mg(2+) pocket. Positions 240, 242, and 245 each coordinate K(+). Thr246 provides a ligand contact to Mg(2+). (6S)-5-formyl-5,6,7,8-tetrahydrofolate is bound at residue Lys450.

The protein belongs to the TRAFAC class TrmE-Era-EngA-EngB-Septin-like GTPase superfamily. TrmE GTPase family. Homodimer. Heterotetramer of two MnmE and two MnmG subunits. K(+) serves as cofactor.

Its subcellular location is the cytoplasm. Functionally, exhibits a very high intrinsic GTPase hydrolysis rate. Involved in the addition of a carboxymethylaminomethyl (cmnm) group at the wobble position (U34) of certain tRNAs, forming tRNA-cmnm(5)s(2)U34. The polypeptide is tRNA modification GTPase MnmE (Thermotoga petrophila (strain ATCC BAA-488 / DSM 13995 / JCM 10881 / RKU-1)).